The following is a 300-amino-acid chain: Ribosomal protein bS6--L-glutamate ligase (300 aa).

An ATP-grasp domain is found at 104–287; sequence MQLLARQGID…IAGKMIRWIE (184 aa). ATP contacts are provided by residues lysine 141, 178–179, aspartate 187, and 211–213; these read EY and RSN. Mg(2+) contacts are provided by aspartate 248, glutamate 260, and asparagine 262. Residues aspartate 248, glutamate 260, and asparagine 262 each coordinate Mn(2+).

Belongs to the RimK family. Mg(2+) serves as cofactor. Mn(2+) is required as a cofactor.

Its function is as follows. An L-glutamate ligase that catalyzes the ATP-dependent post-translational addition of glutamate residues to the C-terminus of ribosomal protein bS6 (RpsF). Is also able to catalyze the synthesis of poly-alpha-glutamate in vitro, via ATP hydrolysis from unprotected glutamate as substrate. The number of glutamate residues added to either RpsF or to poly-alpha-glutamate changes with pH. The polypeptide is Ribosomal protein bS6--L-glutamate ligase (Shigella boydii serotype 18 (strain CDC 3083-94 / BS512)).